A 920-amino-acid chain; its full sequence is Probable transport protein MmpL7 (920 aa).

12 helical membrane-spanning segments follow: residues 44-64 (LLVV…LTFT), 210-230 (ITAW…VLLL), 241-261 (AIVL…AAVV), 271-291 (VFSW…ATML), 311-331 (LPAF…LLLA), 344-364 (LGVF…IALA), 389-409 (SASA…IIGM), 761-781 (LIHD…LASM), 790-810 (AVGV…IALW), 822-842 (VPLV…VAGI), 864-884 (GAVA…VLVS), and 888-908 (FSVL…LITV).

Belongs to the resistance-nodulation-cell division (RND) (TC 2.A.6) family. MmpL subfamily.

It localises to the cell membrane. In Mycobacterium bovis (strain ATCC BAA-935 / AF2122/97), this protein is Probable transport protein MmpL7 (mmpL7).